The sequence spans 294 residues: 3-methyl-2-oxobutanoate hydroxymethyltransferase 1 (294 aa).

Aspartate 55 contributes to the Mg(2+) binding site. 3-methyl-2-oxobutanoate-binding positions include 55–56 (DS) and lysine 123. The active-site Proton acceptor is glutamate 192.

The protein belongs to the PanB family. In terms of assembly, homodecamer; pentamer of dimers. Mg(2+) is required as a cofactor.

The protein resides in the cytoplasm. The enzyme catalyses 3-methyl-2-oxobutanoate + (6R)-5,10-methylene-5,6,7,8-tetrahydrofolate + H2O = 2-dehydropantoate + (6S)-5,6,7,8-tetrahydrofolate. Its pathway is cofactor biosynthesis; (R)-pantothenate biosynthesis; (R)-pantoate from 3-methyl-2-oxobutanoate: step 1/2. Functionally, catalyzes the reversible reaction in which hydroxymethyl group from 5,10-methylenetetrahydrofolate is transferred onto alpha-ketoisovalerate to form ketopantoate. This is 3-methyl-2-oxobutanoate hydroxymethyltransferase 1 from Methylibium petroleiphilum (strain ATCC BAA-1232 / LMG 22953 / PM1).